A 220-amino-acid polypeptide reads, in one-letter code: Probable GTP-binding protein EngB (220 aa).

The EngB-type G domain maps to 31-205 (AGVEIAFAGR…LGILNEWCHP (175 aa)). Residues 39 to 46 (GRSNAGKS), 66 to 70 (GRTQL), 84 to 87 (DLPG), 151 to 154 (TKAD), and 184 to 186 (FSS) contribute to the GTP site. Residues serine 46 and threonine 68 each coordinate Mg(2+).

The protein belongs to the TRAFAC class TrmE-Era-EngA-EngB-Septin-like GTPase superfamily. EngB GTPase family. The cofactor is Mg(2+).

Necessary for normal cell division and for the maintenance of normal septation. The protein is Probable GTP-binding protein EngB of Shewanella sediminis (strain HAW-EB3).